We begin with the raw amino-acid sequence, 227 residues long: MSVVPPNRSQTGWPRGVNQFGNKYIQQTKPLTLERTINLYPLTNYTFGTKEPLYEKDSSVAARFQRMREEFDKIGMRRTVEGVLIVHEHRLPHVLLLQLGTTFFKLPGGELNPGEDEVEGLKRLMTEILGRQDGVLQDWVIDDCIGNWWRPNFEPPQYPYIPAHITKPKEHKKLFLVQLQEKALFAVPKNYKLVAAPLFELYDNAPGYGPIISSLPQLLSRFNFIYN.

Ser2 is modified (N-acetylserine). The necessary for RNA-binding stretch occupies residues 2-147 (SVVPPNRSQT…DWVIDDCIGN (146 aa)). Arg15 is subject to Omega-N-methylarginine. 2 positions are modified to N6-acetyllysine: Lys23 and Lys29. Residue Tyr40 is modified to Phosphotyrosine. N6-acetyllysine is present on Lys56. One can recognise a Nudix hydrolase domain in the interval 76-201 (MRRTVEGVLI…KLVAAPLFEL (126 aa)). The interval 81–160 (EGVLIVHEHR…PNFEPPQYPY (80 aa)) is necessary for interactions with PAPOLA and PABPN1. The interaction with RNA stretch occupies residues 102–104 (TFF). Positions 109 to 130 (GELNPGEDEVEGLKRLMTEILG) match the Nudix box motif.

The protein belongs to the Nudix hydrolase family. CPSF5 subfamily. Homodimer (via N- and C-terminus); binds RNA as homodimer. Component of the cleavage factor Im (CFIm) complex which is a heterotetramer composed of two subunits of NUDT21/CPSF5 and two subunits of CPSF6 or CPSF7 or a heterodimer of CPSF6 and CPSF7. The cleavage factor Im (CFIm) complex associates with the CPSF and CSTF complexes to promote the assembly of the core mRNA 3'-processing machinery. Interacts with CPSF6 (via the RRM domain); this interaction is direct and enhances binding to RNA. Interacts with CPSF7. Interacts with FIP1L1; this interaction occurs in a RNA sequence-specific manner. Interacts with PABPN1. Interacts (via N-terminus) with PAPOLA (via C-terminus); this interaction is direct and diminished by acetylation. Interacts with SNRNP70. Interacts with VIRMA. Post-translationally, acetylated mainly by p300/CBP, recruited to the complex by CPSF6. Acetylation decreases interaction with PAPAO. Deacetylated by the class I/II HDACs, HDAC1, HDAC3 and HDAC10, and by the class III HDACs, SIRT1 and SIRT2. As to expression, expressed in testis. Expressed in male germ cells (at protein level).

The protein localises to the nucleus. It localises to the cytoplasm. In terms of biological role, component of the cleavage factor Im (CFIm) complex that functions as an activator of the pre-mRNA 3'-end cleavage and polyadenylation processing required for the maturation of pre-mRNA into functional mRNAs. CFIm contributes to the recruitment of multiprotein complexes on specific sequences on the pre-mRNA 3'-end, so called cleavage and polyadenylation signals (pA signals). Most pre-mRNAs contain multiple pA signals, resulting in alternative cleavage and polyadenylation (APA) producing mRNAs with variable 3'-end formation. The CFIm complex acts as a key regulator of cleavage and polyadenylation site choice during APA through its binding to 5'-UGUA-3' elements localized in the 3'-untranslated region (UTR) for a huge number of pre-mRNAs. NUDT21/CPSF5 activates indirectly the mRNA 3'-processing machinery by recruiting CPSF6 and/or CPSF7. Binds to 5'-UGUA-3' elements localized upstream of pA signals that act as enhancers of pre-mRNA 3'-end processing. The homodimer mediates simultaneous sequence-specific recognition of two 5'-UGUA-3' elements within the pre-mRNA. Plays a role in somatic cell fate transitions and pluripotency by regulating widespread changes in gene expression through an APA-dependent function. Binds to chromatin. Binds to, but does not hydrolyze mono- and di-adenosine nucleotides. The chain is Cleavage and polyadenylation specificity factor subunit 5 from Mus musculus (Mouse).